The chain runs to 186 residues: Probable chorismate pyruvate-lyase (186 aa).

3 residues coordinate substrate: Arg-77, Leu-115, and Glu-174.

This sequence belongs to the UbiC family.

It localises to the cytoplasm. It catalyses the reaction chorismate = 4-hydroxybenzoate + pyruvate. It participates in cofactor biosynthesis; ubiquinone biosynthesis. Its function is as follows. Removes the pyruvyl group from chorismate, with concomitant aromatization of the ring, to provide 4-hydroxybenzoate (4HB) for the ubiquinone pathway. The polypeptide is Probable chorismate pyruvate-lyase (Shewanella sp. (strain W3-18-1)).